Consider the following 198-residue polypeptide: Small ribosomal subunit protein uS2 (198 aa).

The protein belongs to the universal ribosomal protein uS2 family.

The polypeptide is Small ribosomal subunit protein uS2 (rps2) (Methanothermobacter thermautotrophicus (strain ATCC 29096 / DSM 1053 / JCM 10044 / NBRC 100330 / Delta H) (Methanobacterium thermoautotrophicum)).